Reading from the N-terminus, the 116-residue chain is Large ribosomal subunit protein bL19 (116 aa).

This sequence belongs to the bacterial ribosomal protein bL19 family.

This protein is located at the 30S-50S ribosomal subunit interface and may play a role in the structure and function of the aminoacyl-tRNA binding site. The protein is Large ribosomal subunit protein bL19 of Staphylococcus haemolyticus (strain JCSC1435).